The primary structure comprises 122 residues: Protein SPIRAL1-like 3 (122 aa).

Disordered stretches follow at residues Met1 to Phe78 and Lys96 to Lys122. Residues Thr32–Thr61 are compositionally biased toward low complexity. Ser73 bears the Phosphoserine mark.

It belongs to the SPIRAL1 family. Ubiquitous. Preferentially expressed in above-ground organs.

Functionally, acts redundantly with SPR1 in maintaining the cortical microtubules organization essential for anisotropic cell growth. In Arabidopsis thaliana (Mouse-ear cress), this protein is Protein SPIRAL1-like 3 (SP1L3).